We begin with the raw amino-acid sequence, 302 residues long: Recombination-associated protein RdgC (302 aa).

It belongs to the RdgC family.

Its subcellular location is the cytoplasm. The protein localises to the nucleoid. Functionally, may be involved in recombination. The chain is Recombination-associated protein RdgC from Actinobacillus pleuropneumoniae serotype 3 (strain JL03).